An 838-amino-acid chain; its full sequence is MPYDPTKIEPKWQAYWAGHHIFRVEIDPARPKFYALDMFPYPSGAGLHVGHPLGYTATDIMCRYKRMRGFNVLHPMGWDSFGLPAERHAMRTGVHPDITTKRNIETFRGQVQRLGFSYDWSREFATTDPAYVRWTQWIFLKLFENGLAYQAEVAVNWCPAQNAVLADEEVKDGRYVETGDPVIRRRMRQWMLRITAYADRLLQGLDGLDWPENLKAMQRNWIGRSEGAEIRFPLEHGKGVITVFTTRPETLFGASYILLAPEHPAVAAIVEPEMSEAVAAYIAEAEGLEETVRADAGREKTGVFTGAYAINPANGARLPVWVADYVLAGYGTGALMAVPAHDARDYAFAHSHELPIIRVIDSEADIEKGAYEGEGAMVNSGFLSGLGSPEARSAIVAWLQANGTGWPKVMYRLRDWLFSRQRYWGEPIPVLHLADGSVMPLPEECLPLLPPELDDYAPTPDGEPPLARAQAWVETIVPGTDIPARRETNTMPQWAGSCWYYLRFLDPENTSEPVGREAERYWMPVDLYVGGAEHAVLHLLYARFWHKVLYDIGVVSTEEPFQRLFNQGMILAHSYRDAAGRYYAPSSVVEEEGRWFAGSVEVQRAVEKMSKSQLNVVNPDDVVHQFGADALRLYEMFMGPLDAAKPWQTAGVIGVRRFLERAWRIVCDESDGLSPVVLEAAPSPQLLRLRHQTVKTVTADIEAIRFNTAVSRLMELANALTAEAARPREVVETFVLLLAPFAPHIAEELWSKLGHGETLTWVSWPTFDPALIEMETREYVVQINGKVRHRFEAAADLGEALLAAARSEPSVMALLDGKTVVKEVLVPGRLVNFVVEDL.

The 'HIGH' region signature appears at 40–51 (PYPSGAGLHVGH). The short motif at 608–612 (KMSKS) is the 'KMSKS' region element. Position 611 (lysine 611) interacts with ATP.

It belongs to the class-I aminoacyl-tRNA synthetase family.

It is found in the cytoplasm. It carries out the reaction tRNA(Leu) + L-leucine + ATP = L-leucyl-tRNA(Leu) + AMP + diphosphate. This Rhizobium johnstonii (strain DSM 114642 / LMG 32736 / 3841) (Rhizobium leguminosarum bv. viciae) protein is Leucine--tRNA ligase 1.